A 280-amino-acid polypeptide reads, in one-letter code: UPF0494 membrane protein C750.06c (280 aa).

Helical transmembrane passes span 107–127, 144–164, 178–198, and 199–219; these read WPLL…KFEV, IWVP…SLIF, VIIA…GMII, and AALG…LYFG.

Belongs to the UPF0494 family.

The protein resides in the cytoplasm. It is found in the vacuole. The protein localises to the membrane. The sequence is that of UPF0494 membrane protein C750.06c from Schizosaccharomyces pombe (strain 972 / ATCC 24843) (Fission yeast).